The sequence spans 202 residues: NADH-quinone oxidoreductase subunit B 2 (202 aa).

Positions 38, 39, 104, and 133 each coordinate [4Fe-4S] cluster.

It belongs to the complex I 20 kDa subunit family. NDH-1 is composed of 14 different subunits. Subunits NuoB, C, D, E, F, and G constitute the peripheral sector of the complex. [4Fe-4S] cluster is required as a cofactor.

It localises to the cell inner membrane. It carries out the reaction a quinone + NADH + 5 H(+)(in) = a quinol + NAD(+) + 4 H(+)(out). In terms of biological role, NDH-1 shuttles electrons from NADH, via FMN and iron-sulfur (Fe-S) centers, to quinones in the respiratory chain. The immediate electron acceptor for the enzyme in this species is believed to be ubiquinone. Couples the redox reaction to proton translocation (for every two electrons transferred, four hydrogen ions are translocated across the cytoplasmic membrane), and thus conserves the redox energy in a proton gradient. This chain is NADH-quinone oxidoreductase subunit B 2, found in Koribacter versatilis (strain Ellin345).